Reading from the N-terminus, the 802-residue chain is MSFNHQEIEKKWQGYWEENKTFRTPDETEKPKFYALDMFPYPSGAGLHVGHPEGYTATDILSRMKRMQGYNVLHPMGWDAFGLPAEQYALDTGNSPAEFTEHNINTFRNQIKSLGFSYDWDREVNTTDPNYYKWTQWIFLKLFEKGLAYVDEVPVNWCPALGTVLANEEIIDGKSERGGHPVERRPMRQWMLKITAYGDRLLEDLDELDWPESLKDMQRNWIGRSEGAEVHFNIDGTDEKFTVFTTRPDTLFGATYCVLAPEHALVAEITTAEQKEAVEAYINAVKMKSDLERTELAKEKTGVFTGAYAVNPVNGEKLPIWIADYVLATYGTGAVMAVPAHDERDYEFASVFNLPMKEVVKGGDITKEVYTGDGAHVNSAFLDGLNKEEAIAKMIEWLEATSAGNQKVTYRLRDWLFSRQRYWGEPIPVIHWEDGTMTAVKEEELPLVLPKTENIRPSGTGESPLANIDEWVNVVDPETGKKGRRETNTMPQWAGSCWYYLRYIDPNNSEALVDPEKVKQWLPVDIYIGGAEHAVLHLLYARFWHKVLYDIGVVPTKEPFQQLFNQGMILGENNEKMSKSKGNVVNPDDIVASHGADTLRLYEMFMGPLDASIAWSENGLDGARRFLDRVWRLFVQDNGELSEKITDAPNKELEKAYHQTVKKVTEDYAELRFNTAISQMMVFINDAYKAETLPREYVEGFVKMIAPVAPHIGEELWSKLGYNETITYASWPTFDESKLVEDEVEIVVQVMGKVRAKLTMSKDASKEEMEQLALEAIQDQIEGKTVRKVVVVPGKLVNVVAN.

The 'HIGH' region signature appears at 40–51 (PYPSGAGLHVGH). The 'KMSKS' region signature appears at 576–580 (KMSKS). Lysine 579 is an ATP binding site.

It belongs to the class-I aminoacyl-tRNA synthetase family.

The protein resides in the cytoplasm. The catalysed reaction is tRNA(Leu) + L-leucine + ATP = L-leucyl-tRNA(Leu) + AMP + diphosphate. The polypeptide is Leucine--tRNA ligase (Bacillus cereus (strain B4264)).